A 168-amino-acid polypeptide reads, in one-letter code: 6,7-dimethyl-8-ribityllumazine synthase (168 aa).

Residues F24, 58–60 (ALE), and 82–84 (AVI) contribute to the 5-amino-6-(D-ribitylamino)uracil site. 87-88 (ET) contacts (2S)-2-hydroxy-3-oxobutyl phosphate. H90 (proton donor) is an active-site residue. A 5-amino-6-(D-ribitylamino)uracil-binding site is contributed by N115. R129 contacts (2S)-2-hydroxy-3-oxobutyl phosphate.

The protein belongs to the DMRL synthase family.

The enzyme catalyses (2S)-2-hydroxy-3-oxobutyl phosphate + 5-amino-6-(D-ribitylamino)uracil = 6,7-dimethyl-8-(1-D-ribityl)lumazine + phosphate + 2 H2O + H(+). The protein operates within cofactor biosynthesis; riboflavin biosynthesis; riboflavin from 2-hydroxy-3-oxobutyl phosphate and 5-amino-6-(D-ribitylamino)uracil: step 1/2. In terms of biological role, catalyzes the formation of 6,7-dimethyl-8-ribityllumazine by condensation of 5-amino-6-(D-ribitylamino)uracil with 3,4-dihydroxy-2-butanone 4-phosphate. This is the penultimate step in the biosynthesis of riboflavin. In Paraburkholderia phytofirmans (strain DSM 17436 / LMG 22146 / PsJN) (Burkholderia phytofirmans), this protein is 6,7-dimethyl-8-ribityllumazine synthase.